We begin with the raw amino-acid sequence, 518 residues long: Calcium and calcium/calmodulin-dependent serine/threonine-protein kinase (518 aa).

A Protein kinase domain is found at 13–300 (YEISEILGRG…AQELLSHPWV (288 aa)). ATP contacts are provided by residues 19–27 (LGRGGFSVV) and K44. Catalysis depends on D165, which acts as the Proton acceptor. At T265 the chain carries Phosphothreonine. The interval 323–336 (ARRKLRAAAIASVW) is calmodulin-binding. Positions 344-365 (TKKLRSLVGTYDLKEEEIESLR) form a coiled coil. EF-hand domains are found at residues 394–429 (SLIP…LKNS), 430–465 (KGDD…LPEE), and 472–507 (TEPG…DSSL). Residues D407, N409, D411, T413, E418, D443, D445, S447, C449, E454, D485, N487, D489, K491, and E496 each contribute to the Ca(2+) site.

The protein belongs to the protein kinase superfamily. CAMK Ser/Thr protein kinase family. CaMK subfamily. Interacts with IPD3. Interacts with CIP73. In terms of processing, autophosphorylation stimulated by calcium. Occurs probably by an intermolecular mechanism. Mainly expressed in roots and nodules. Detected in leaves, stems and cotyledons.

The protein localises to the nucleus. It carries out the reaction L-seryl-[protein] + ATP = O-phospho-L-seryl-[protein] + ADP + H(+). The catalysed reaction is L-threonyl-[protein] + ATP = O-phospho-L-threonyl-[protein] + ADP + H(+). Its activity is regulated as follows. Activated by calcium/calmodulin binding after calcium-induced autophosphorylation. Its function is as follows. Calcium- and calmodulin-dependent protein kinase necessary and sufficient for dedifferentiation of root cortical cells into nodule initials. Not required for calcium spiking. Acts as central regulator of the nodule organogenesis program. Required for root hair curling and infection thread (IT) formation upon rhizobial infection, and arbuscule formation during arbuscular mycorrhiza (AM) fungal infection. Phosphorylates the downstream target IPD3, a protein required for root infection by symbiotic rhizobia and AM fungi. Phosphorylates the downstream target CIP73, a protein required for root nodule organogenesis. Mediates the phosphorylation of leghemoglobins (e.g. LB1) to modulate their oxygen O(2) affinity, thus regulating the diffusion of oxygen to the bacteroids in nodules. The chain is Calcium and calcium/calmodulin-dependent serine/threonine-protein kinase from Lotus japonicus (Lotus corniculatus var. japonicus).